The primary structure comprises 459 residues: Argininosuccinate lyase (459 aa).

The protein belongs to the lyase 1 family. Argininosuccinate lyase subfamily.

It is found in the cytoplasm. The catalysed reaction is 2-(N(omega)-L-arginino)succinate = fumarate + L-arginine. It functions in the pathway amino-acid biosynthesis; L-arginine biosynthesis; L-arginine from L-ornithine and carbamoyl phosphate: step 3/3. This chain is Argininosuccinate lyase, found in Photorhabdus laumondii subsp. laumondii (strain DSM 15139 / CIP 105565 / TT01) (Photorhabdus luminescens subsp. laumondii).